A 471-amino-acid polypeptide reads, in one-letter code: Variant surface glycoprotein ILTAT 1.1BC (471 aa).

The first 21 residues, 1–21 (MVKAIASLMLLHIWAIEEIKA), serve as a signal peptide directing secretion. Asn-130 carries N-linked (GlcNAc...) asparagine glycosylation. A compositionally biased stretch (polar residues) spans 158 to 168 (TVSKTTECNTE). Disordered regions lie at residues 158–183 (TVSK…TLSK) and 204–232 (GGAC…TTAS). Basic and acidic residues predominate over residues 214 to 226 (DKIHITNETDSKN). N-linked (GlcNAc...) asparagine glycans are attached at residues Asn-220 and Asn-260. 2 disulfides stabilise this stretch: Cys-397-Cys-410 and Cys-406-Cys-421. The tract at residues 432–454 (AEQAATNQETEGKDGKTTNTTGS) is disordered. Asn-450 carries N-linked (GlcNAc...) asparagine glycosylation. Ser-454 carries the GPI-anchor amidated serine lipid modification. The propeptide at 455–471 (NSFLINKAPVLLAFLLL) is removed in mature form.

Its subcellular location is the cell membrane. Functionally, VSG forms a coat on the surface of the parasite. The trypanosome evades the immune response of the host by expressing a series of antigenically distinct VSGs from an estimated 1000 VSG genes. In Trypanosoma brucei brucei, this protein is Variant surface glycoprotein ILTAT 1.1BC.